Here is a 397-residue protein sequence, read N- to C-terminus: MQKQNIVILGSTGSIGKSTLSVIENNPQKYHAFALVGGKNVEAMFEQCIKFRPHFAALDDVNAAKILREKLIAHHIPTEVLAGRRAICELAAHPDADQIMASIVGAAGLLPTLSAVKAGKRVLLANKESLVTCGQLFIDAVKNYGSKLLPVDSEHNAIFQSLPPEAQEKIGFCPLSELGVSKIILTGSGGPFRYTPLEQFTNITPEQAVAHPNWSMGKKISVDSATMMNKGLEYIEARWLFNASAEEMEVIIHPQSIIHSMVRYVDGSVITQMGNPDMRTPIAETMAYPHRTFAGVEPLDFFKIKELTFIEPDFNRYPNLKLAIDAFAAGQYATTAMNAANEIAVQAFLDRQIGFMDIAKINSKTIERISPYTIQNIDDVLEIDAQAREIAKTLLRE.

Residues T12, G13, S14, I15, G38, K39, N40, and N126 each contribute to the NADPH site. K127 contributes to the 1-deoxy-D-xylulose 5-phosphate binding site. E128 is an NADPH binding site. D152 contributes to the Mn(2+) binding site. 4 residues coordinate 1-deoxy-D-xylulose 5-phosphate: S153, E154, S188, and H211. Mn(2+) is bound at residue E154. G217 provides a ligand contact to NADPH. 1-deoxy-D-xylulose 5-phosphate contacts are provided by S224, N229, K230, and E233. Mn(2+) is bound at residue E233.

This sequence belongs to the DXR family. Requires Mg(2+) as cofactor. The cofactor is Mn(2+).

It catalyses the reaction 2-C-methyl-D-erythritol 4-phosphate + NADP(+) = 1-deoxy-D-xylulose 5-phosphate + NADPH + H(+). It participates in isoprenoid biosynthesis; isopentenyl diphosphate biosynthesis via DXP pathway; isopentenyl diphosphate from 1-deoxy-D-xylulose 5-phosphate: step 1/6. Its function is as follows. Catalyzes the NADPH-dependent rearrangement and reduction of 1-deoxy-D-xylulose-5-phosphate (DXP) to 2-C-methyl-D-erythritol 4-phosphate (MEP). This Haemophilus influenzae (strain ATCC 51907 / DSM 11121 / KW20 / Rd) protein is 1-deoxy-D-xylulose 5-phosphate reductoisomerase.